We begin with the raw amino-acid sequence, 233 residues long: Large ribosomal subunit protein uL1 (233 aa).

It belongs to the universal ribosomal protein uL1 family. Part of the 50S ribosomal subunit.

In terms of biological role, binds directly to 23S rRNA. The L1 stalk is quite mobile in the ribosome, and is involved in E site tRNA release. Its function is as follows. Protein L1 is also a translational repressor protein, it controls the translation of the L11 operon by binding to its mRNA. The chain is Large ribosomal subunit protein uL1 from Zymomonas mobilis subsp. mobilis (strain ATCC 31821 / ZM4 / CP4).